The sequence spans 360 residues: Membrane-bound lytic murein transglycosylase C (360 aa).

The first 16 residues, 1–16 (MKKFFALALVAPLLIS), serve as a signal peptide directing secretion. Cys17 carries N-palmitoyl cysteine lipidation. Cys17 carries S-diacylglycerol cysteine lipidation.

Belongs to the transglycosylase Slt family.

It is found in the cell outer membrane. The catalysed reaction is Exolytic cleavage of the (1-&gt;4)-beta-glycosidic linkage between N-acetylmuramic acid (MurNAc) and N-acetylglucosamine (GlcNAc) residues in peptidoglycan, from either the reducing or the non-reducing ends of the peptidoglycan chains, with concomitant formation of a 1,6-anhydrobond in the MurNAc residue.. In terms of biological role, murein-degrading enzyme. May play a role in recycling of muropeptides during cell elongation and/or cell division. This is Membrane-bound lytic murein transglycosylase C from Citrobacter koseri (strain ATCC BAA-895 / CDC 4225-83 / SGSC4696).